Consider the following 1077-residue polypeptide: Adenylate cyclase type 4 (1077 aa).

At 1–28 (MARLFSPRPPPSEDLFYETYYSLSQQYP) the chain is on the cytoplasmic side. The next 6 helical transmembrane spans lie at 29-50 (LLIL…VAWA), 61-80 (FLTT…GLAS), 94-117 (GLIW…VSAW), 120-138 (VSFF…PLGM), 141-162 (AAAA…YLGW), and 170-190 (LLPQ…VGAY). The Cytoplasmic segment spans residues 191-582 (HKALMERALR…YRLSALPAFK (392 aa)). 3 residues coordinate Mg(2+): D278, I279, and D322. Residues 278–283 (DIVGFT), 320–322 (LGD), and R366 each bind ATP. The disordered stretch occupies residues 503–524 (TSTPLPEKAFSPQWSLDRSRTP). Residue S517 is modified to Phosphoserine. T533 is modified (phosphothreonine). The next 3 membrane-spanning stretches (helical) occupy residues 583-604 (YYAA…LVTT), 608-630 (ALII…CFSE), and 661-684 (VALG…FLPV). Topologically, residues 685 to 717 (SSDCLFLASNVSSVTFNASWEMPGSLPLISIPL) are extracellular. N-linked (GlcNAc...) asparagine glycosylation is found at N694 and N701. 3 helical membrane-spanning segments follow: residues 718-738 (ISIP…SLFL), 746-766 (LLLL…SHAW), and 793-809 (MGAI…LVLA). The Cytoplasmic portion of the chain corresponds to 810-1077 (RQNEYYCRLD…LTRTGSPSAS (268 aa)). ATP contacts are provided by residues K927, 1007-1009 (DIW), 1014-1018 (NVASR), and K1054.

It belongs to the adenylyl cyclase class-4/guanylyl cyclase family. Mg(2+) is required as a cofactor. Requires Mn(2+) as cofactor.

The protein resides in the cell membrane. It localises to the cytoplasm. The catalysed reaction is ATP = 3',5'-cyclic AMP + diphosphate. Activated by forskolin. Insensitive to calcium/calmodulin. Stimulated by GNAS and by the G-protein beta and gamma subunit complex. Functionally, catalyzes the formation of the signaling molecule cAMP in response to G-protein signaling. This chain is Adenylate cyclase type 4 (Adcy4), found in Mus musculus (Mouse).